The chain runs to 536 residues: Membrane protein insertase YidC (536 aa).

A helical transmembrane segment spans residues 5-25; the sequence is ALIAVILSIVFFYGYSALFPP. The segment at 30–54 is disordered; the sequence is APAPSAQQAVTGSQPGAPQASVAAV. Residues 31-54 show a composition bias toward low complexity; it reads PAPSAQQAVTGSQPGAPQASVAAV. A run of 4 helical transmembrane segments spans residues 350 to 370, 420 to 440, 454 to 474, and 494 to 514; these read YGIA…PLTH, LPML…MFSI, LAGK…MVIQ, and PVVF…YWLV.

This sequence belongs to the OXA1/ALB3/YidC family. Type 1 subfamily. In terms of assembly, interacts with the Sec translocase complex via SecD. Specifically interacts with transmembrane segments of nascent integral membrane proteins during membrane integration.

Its subcellular location is the cell inner membrane. In terms of biological role, required for the insertion and/or proper folding and/or complex formation of integral membrane proteins into the membrane. Involved in integration of membrane proteins that insert both dependently and independently of the Sec translocase complex, as well as at least some lipoproteins. Aids folding of multispanning membrane proteins. The chain is Membrane protein insertase YidC from Geobacter metallireducens (strain ATCC 53774 / DSM 7210 / GS-15).